A 253-amino-acid polypeptide reads, in one-letter code: Phosphoribosylaminoimidazole-succinocarboxamide synthase (253 aa).

Belongs to the SAICAR synthetase family.

It carries out the reaction 5-amino-1-(5-phospho-D-ribosyl)imidazole-4-carboxylate + L-aspartate + ATP = (2S)-2-[5-amino-1-(5-phospho-beta-D-ribosyl)imidazole-4-carboxamido]succinate + ADP + phosphate + 2 H(+). It functions in the pathway purine metabolism; IMP biosynthesis via de novo pathway; 5-amino-1-(5-phospho-D-ribosyl)imidazole-4-carboxamide from 5-amino-1-(5-phospho-D-ribosyl)imidazole-4-carboxylate: step 1/2. The polypeptide is Phosphoribosylaminoimidazole-succinocarboxamide synthase (Roseobacter denitrificans (strain ATCC 33942 / OCh 114) (Erythrobacter sp. (strain OCh 114))).